A 159-amino-acid polypeptide reads, in one-letter code: Outer envelope pore protein 16-3, chloroplastic/mitochondrial (159 aa).

M1 carries the N-acetylmethionine modification. The interval 1 to 65 (MDPAEMRYLE…IRTLKMMGTH (65 aa)) is contains beta strands. Transmembrane regions (helical) follow at residues 24-40 (ITGF…LATW), 62-79 (MGTH…YIGV), and 92-109 (FYNG…VLGY).

Belongs to the Tim17/Tim22/Tim23 family. Plastid outer envelope porin OEP16 (TC 1.B.30) subfamily. In terms of assembly, homodimer and oligomers in membrane. Part of both the NADH-ubiquinone oxidoreductase complex I and of the TIM17:23 complex. Interacts with TIM23-2.

It is found in the plastid. The protein resides in the chloroplast outer membrane. It localises to the mitochondrion outer membrane. Its subcellular location is the mitochondrion inner membrane. Its function is as follows. Voltage-dependent high-conductance channel with a slight cation-selectivity; selective for amino acids but excludes triosephosphates or uncharged sugars. Non-essential amino acid-selective channel protein and translocation pore for NADPH:protochlorophyllide oxidoreductase A (PORA) and possibly PORB. In Arabidopsis thaliana (Mouse-ear cress), this protein is Outer envelope pore protein 16-3, chloroplastic/mitochondrial (OEP163).